The primary structure comprises 319 residues: HPr kinase/phosphorylase (319 aa).

Catalysis depends on residues His-141 and Lys-162. 156–163 (GNSGVGKS) is a binding site for ATP. Ser-163 is a Mg(2+) binding site. Asp-180 (proton acceptor; for phosphorylation activity. Proton donor; for dephosphorylation activity) is an active-site residue. The important for the catalytic mechanism of both phosphorylation and dephosphorylation stretch occupies residues 204 to 213 (MEIRGIGIID). Position 205 (Glu-205) interacts with Mg(2+). Arg-246 is an active-site residue. Positions 267–272 (PVKVGR) are important for the catalytic mechanism of dephosphorylation.

Belongs to the HPrK/P family. Homohexamer. Mg(2+) is required as a cofactor.

It carries out the reaction [HPr protein]-L-serine + ATP = [HPr protein]-O-phospho-L-serine + ADP + H(+). The catalysed reaction is [HPr protein]-O-phospho-L-serine + phosphate + H(+) = [HPr protein]-L-serine + diphosphate. Its function is as follows. Catalyzes the ATP- as well as the pyrophosphate-dependent phosphorylation of a specific serine residue in HPr, a phosphocarrier protein of the phosphoenolpyruvate-dependent sugar phosphotransferase system (PTS). HprK/P also catalyzes the pyrophosphate-producing, inorganic phosphate-dependent dephosphorylation (phosphorolysis) of seryl-phosphorylated HPr (P-Ser-HPr). The two antagonistic activities of HprK/P are regulated by several intracellular metabolites, which change their concentration in response to the absence or presence of rapidly metabolisable carbon sources (glucose, fructose, etc.) in the growth medium. Therefore, by controlling the phosphorylation state of HPr, HPrK/P is a sensor enzyme that plays a major role in the regulation of carbon metabolism and sugar transport: it mediates carbon catabolite repression (CCR), and regulates PTS-catalyzed carbohydrate uptake and inducer exclusion. The protein is HPr kinase/phosphorylase of Lactobacillus johnsonii (strain CNCM I-12250 / La1 / NCC 533).